Reading from the N-terminus, the 276-residue chain is Putative olfactory receptor 10J6 (276 aa).

Residues 1-25 (MRRKNLTEVTEFVFLGFSRFHKHHI) lie on the Extracellular side of the membrane. A glycan (N-linked (GlcNAc...) asparagine) is linked at asparagine 5. Residues 26-46 (TLFVVFLILYTLTVAGNAIIM) form a helical membrane-spanning segment. Residues 47 to 54 (TIICIDRH) are Cytoplasmic-facing. Residues 55–75 (LHTPMYFFLSMLASSKTVYTL) traverse the membrane as a helical segment. Over 76–99 (FIIPQMLSSFVTQTQPISLAGCTT) the chain is Extracellular. Residues cysteine 97 and cysteine 188 are joined by a disulfide bond. The chain crosses the membrane as a helical span at residues 100 to 120 (QTFFFVTLAINNCFLLTVMGY). Residues 121–139 (DHYMAICNPLRYRVITSKK) lie on the Cytoplasmic side of the membrane. The helical transmembrane segment at 140-160 (VCVQLVCGAFSIGLAMAAVQV) threads the bilayer. Residues 161-196 (TSIFTLPFCHTVVGHFFCDILPVMKLSCINTTINEI) are Extracellular-facing. Asparagine 190 carries an N-linked (GlcNAc...) asparagine glycan. Residues 197–216 (INFVVRLFVILVPMGLVFIS) form a helical membrane-spanning segment. Residues 217-236 (YVLIISTVLKIASAEGWKKT) lie on the Cytoplasmic side of the membrane. A helical transmembrane segment spans residues 237–257 (FATCAFHLTVVIVHYGCASIA). The Extracellular portion of the chain corresponds to 258 to 270 (YLMPKSENSIEQD). The helical transmembrane segment at 271 to 276 (LLLSVT) threads the bilayer.

It belongs to the G-protein coupled receptor 1 family.

The protein resides in the cell membrane. In terms of biological role, odorant receptor. In Homo sapiens (Human), this protein is Putative olfactory receptor 10J6 (OR10J6P).